A 304-amino-acid chain; its full sequence is Transmembrane protein 178A (304 aa).

Positions 1 to 25 are cleaved as a signal peptide; the sequence is MESRGLVTAVSLTLSICSLLLLVTA. Topologically, residues 26-186 are extracellular; sequence IFTDHWYETD…LLHLRRITAG (161 aa). Residue Asn165 is glycosylated (N-linked (GlcNAc...) asparagine). A helical transmembrane segment spans residues 187-207; it reads FLGMAAAVLLCGCIVAAISFF. At 208–215 the chain is on the cytoplasmic side; the sequence is WEESLTQH. Residues 216-236 form a helical membrane-spanning segment; it reads VAGLLFLMTGIFCTISLCTYA. The Extracellular portion of the chain corresponds to 237–267; that stretch reads ASVAYELNRQPKFIYGLPSDVEHGYSWSLFC. Residues 268-288 traverse the membrane as a helical segment; sequence AWCSLGLIVAAGCLCTAYPFI. At 289-304 the chain is on the cytoplasmic side; the sequence is SRTKILHLKFARDSCV.

This sequence belongs to the TMEM178 family.

It localises to the endoplasmic reticulum membrane. Functionally, may act as a negative regulator of osteoclast differentiation. In Xenopus laevis (African clawed frog), this protein is Transmembrane protein 178A (tmem178a).